Reading from the N-terminus, the 314-residue chain is Olfactory receptor-like protein I9 (314 aa).

At 1-25 (MTRRNQTAISQFFLLGLPFPPEYQH) the chain is on the extracellular side. The N-linked (GlcNAc...) asparagine glycan is linked to asparagine 5. A helical transmembrane segment spans residues 26 to 50 (LFYALFLAMYLTTLLGNLIIIILIL). Residues 51–57 (LDSHLHT) are Cytoplasmic-facing. Residues 58-79 (PMYLFLSNLSFADLCFSSVTMP) traverse the membrane as a helical segment. Over 80 to 100 (KLLQNMQSQVPSIPYAGCLAQ) the chain is Extracellular. Cysteine 97 and cysteine 189 are joined by a disulfide. A helical membrane pass occupies residues 101–120 (IYFFLFFGDLGNFLLVAMAY). Residues 121–139 (DRYVAICFPLHYMSIMSPK) lie on the Cytoplasmic side of the membrane. The helical transmembrane segment at 140-158 (LCVSLVVLSWVLTTFHAML) threads the bilayer. At 159–196 (HTLLMARLSFCEDSVIPHYFCDMSTLLKVACSDTHDNE) the chain is on the extracellular side. The chain crosses the membrane as a helical span at residues 197–219 (LAIFILGGPIVVLPFLLIIVSYA). Over 220–236 (RIVSSIFKVPSSQSIHK) the chain is Cytoplasmic. Residues 237 to 260 (AFSTCGSHLSVVSLFYGTVIGLYL) form a helical membrane-spanning segment. Residues 261-272 (CPSANNSTVKET) are Extracellular-facing. Residues 273 to 292 (VMSLMYTMVTPMLNPFIYSL) form a helical membrane-spanning segment. The Cytoplasmic segment spans residues 293–314 (RNRDIKDALEKIMCKKQIPSFL).

The protein belongs to the G-protein coupled receptor 1 family. Olfactory epithelium.

Its subcellular location is the cell membrane. Functionally, odorant receptor. This chain is Olfactory receptor-like protein I9, found in Rattus norvegicus (Rat).